We begin with the raw amino-acid sequence, 417 residues long: Sterile alpha motif domain-containing protein 14 (417 aa).

The segment at Leu37–His306 is disordered. A compositionally biased stretch (basic residues) spans Lys40–Ser49. Phosphoserine occurs at positions 84 and 108. Positions Ser138 to Ser153 are enriched in low complexity. The span at Pro159–Ser173 shows a compositional bias: basic and acidic residues. A phosphoserine mark is found at Ser173 and Ser179. 2 stretches are compositionally biased toward low complexity: residues Ser244–Ser260 and Ser276–Pro289. Phosphoserine is present on Ser279. Phosphothreonine is present on Thr283. The SAM domain maps to Trp326–Ala389. Positions Asp375–Lys416 form a coiled coil. The interval Ala390–Ser417 is disordered.

The protein is Sterile alpha motif domain-containing protein 14 (Samd14) of Rattus norvegicus (Rat).